The following is a 502-amino-acid chain: MPLVVRFPDVLKNRLETLQSAFDMAINSQGYEAHYQGVYPVKCNQDRFVVEDIVKFGSPYRFGLEAGSKPELLLAMNCLSKGSADALLVCNGFKDTEYISLALVARKLLLNSVIVLEQEEELDLVIDISRKMSVRPVIGLRAKLRTKHSGHFGSTSGEKGKFGLTTTQILRVVKKLDESGMLDCLQLLHFHIGSQIPTTELLADGVGEATQIYSELVRLGAGMKFIDIGGGLGIDYDGSKSSNSDVSVCYSIEEYASAVVQAVLYVCDRKGGKHPVICSESGRAIVSHHSILIFEAVSASTSHVSTQPSSGGLQSLVETLNEDARADYRNLSAAAVRGEYDTCLIYSDQLKQRCVEQFKDGSLDIEQLAAVDSICDWVSKAIGVADPVRTYHVNLSVFTSIPDFWGFSQLFPIVPIHRLDEKPTMRGILSDLTCDSDGKVDKFIGGESSLPLHEIGSGDGGRYYLGMFLGGAYEEALGGLHNLFGGPSVVRVMQSDSPHSFA.

The residue at position 42 (Lys-42) is an N6-(pyridoxal phosphate)lysine. 226–236 (IDIGGGLGIDY) contributes to the substrate binding site.

It belongs to the Orn/Lys/Arg decarboxylase class-II family. SpeA subfamily. Pyridoxal 5'-phosphate serves as cofactor. The cofactor is Mg(2+).

The enzyme catalyses L-arginine + H(+) = agmatine + CO2. It functions in the pathway amine and polyamine biosynthesis; agmatine biosynthesis; agmatine from L-arginine: step 1/1. The chain is Arginine decarboxylase from Solanum lycopersicum (Tomato).